Reading from the N-terminus, the 126-residue chain is Small ribosomal subunit protein uS13 (126 aa).

The interval 96–126 (PVRGQRTRTNARTRRGSRRTVAGKKKPAAKK) is disordered. The segment covering 100–126 (QRTRTNARTRRGSRRTVAGKKKPAAKK) has biased composition (basic residues).

Belongs to the universal ribosomal protein uS13 family. As to quaternary structure, part of the 30S ribosomal subunit. Forms a loose heterodimer with protein S19. Forms two bridges to the 50S subunit in the 70S ribosome.

Its function is as follows. Located at the top of the head of the 30S subunit, it contacts several helices of the 16S rRNA. In the 70S ribosome it contacts the 23S rRNA (bridge B1a) and protein L5 of the 50S subunit (bridge B1b), connecting the 2 subunits; these bridges are implicated in subunit movement. Contacts the tRNAs in the A and P-sites. The protein is Small ribosomal subunit protein uS13 of Thermosynechococcus vestitus (strain NIES-2133 / IAM M-273 / BP-1).